The following is a 387-amino-acid chain: 3-ketoacyl-CoA thiolase (387 aa).

C91 acts as the Acyl-thioester intermediate in catalysis. Active-site proton acceptor residues include H343 and C373.

Belongs to the thiolase-like superfamily. Thiolase family. As to quaternary structure, heterotetramer of two alpha chains (FadB) and two beta chains (FadA).

It localises to the cytoplasm. It carries out the reaction an acyl-CoA + acetyl-CoA = a 3-oxoacyl-CoA + CoA. The protein operates within lipid metabolism; fatty acid beta-oxidation. In terms of biological role, catalyzes the final step of fatty acid oxidation in which acetyl-CoA is released and the CoA ester of a fatty acid two carbons shorter is formed. In Shigella boydii serotype 4 (strain Sb227), this protein is 3-ketoacyl-CoA thiolase.